We begin with the raw amino-acid sequence, 250 residues long: Green-light absorbing proteorhodopsin (250 aa).

An N-terminal signal peptide occupies residues 1-18; the sequence is MGKLLLILGSVIALPTFA. The Extracellular portion of the chain corresponds to 19-29; sequence AGGGDLDASDY. A helical membrane pass occupies residues 30-53; the sequence is TGVSFWLVTAALLASTVFFFVERD. Over 54-58 the chain is Cytoplasmic; it reads RVSAK. The chain crosses the membrane as a helical span at residues 59-87; that stretch reads WKTSLTVSGLVTGIAFWHYMYMRGVWIET. At 88–90 the chain is on the extracellular side; sequence GDS. Residues 91-118 form a helical membrane-spanning segment; sequence PTVFRYIDWLLTVPLLICEFYLILAAAT. The Cytoplasmic portion of the chain corresponds to 119-121; sequence NVA. A helical membrane pass occupies residues 122–144; sequence GSLFKKLLVGSLVMLVFGYMGEA. The Extracellular portion of the chain corresponds to 145-147; it reads GIM. The chain crosses the membrane as a helical span at residues 148 to 177; sequence AAWPAFIIGCLAWVYMIYELWAGEGKSACN. Residues 178-180 lie on the Cytoplasmic side of the membrane; sequence TAS. A helical transmembrane segment spans residues 181–208; sequence PAVQSAYNTMMYIIIFGWAIYPVGYFTG. The Extracellular portion of the chain corresponds to 209-218; sequence YLMGDGGSAL. Residues 219 to 249 traverse the membrane as a helical segment; the sequence is NLNLIYNLADFVNKILFGLIIWNVAVKESSN. K232 bears the N6-(retinylidene)lysine mark. Residue A250 is a topological domain, cytoplasmic.

Belongs to the archaeal/bacterial/fungal opsin family. In terms of assembly, homopentamer. GPR protomers assemble into a pentamer around a central pore with a C5 symmetry axis. Contains one covalently linked retinal chromophore per subunit.

It localises to the cell membrane. Light-driven proton pump. The sequence is that of Green-light absorbing proteorhodopsin from Unknown prokaryotic organism.